Here is a 673-residue protein sequence, read N- to C-terminus: Glycine--tRNA ligase beta subunit (673 aa).

The protein belongs to the class-II aminoacyl-tRNA synthetase family. In terms of assembly, tetramer of two alpha and two beta subunits.

The protein resides in the cytoplasm. It catalyses the reaction tRNA(Gly) + glycine + ATP = glycyl-tRNA(Gly) + AMP + diphosphate. This is Glycine--tRNA ligase beta subunit from Lactococcus lactis subsp. cremoris (strain SK11).